The primary structure comprises 704 residues: Elongation factor G (704 aa).

Residues 6–282 (NKVRNIGIMA…AVIDYLPTPL (277 aa)) form the tr-type G domain. Residues 15-22 (AHIDAGKT), 79-83 (DTPGH), and 133-136 (NKMD) contribute to the GTP site.

This sequence belongs to the TRAFAC class translation factor GTPase superfamily. Classic translation factor GTPase family. EF-G/EF-2 subfamily.

The protein localises to the cytoplasm. Catalyzes the GTP-dependent ribosomal translocation step during translation elongation. During this step, the ribosome changes from the pre-translocational (PRE) to the post-translocational (POST) state as the newly formed A-site-bound peptidyl-tRNA and P-site-bound deacylated tRNA move to the P and E sites, respectively. Catalyzes the coordinated movement of the two tRNA molecules, the mRNA and conformational changes in the ribosome. In Corynebacterium diphtheriae (strain ATCC 700971 / NCTC 13129 / Biotype gravis), this protein is Elongation factor G.